A 353-amino-acid polypeptide reads, in one-letter code: UPF0283 membrane protein YcjF (353 aa).

3 consecutive transmembrane segments (helical) span residues 70–90 (MVMG…VQWT), 100–120 (VALG…GSVV), and 213–233 (ESTL…FIAW).

This sequence belongs to the UPF0283 family.

It localises to the cell inner membrane. This Escherichia coli O139:H28 (strain E24377A / ETEC) protein is UPF0283 membrane protein YcjF.